Reading from the N-terminus, the 74-residue chain is Small ribosomal subunit protein bS18 (74 aa).

Belongs to the bacterial ribosomal protein bS18 family. Part of the 30S ribosomal subunit. Forms a tight heterodimer with protein bS6.

Its function is as follows. Binds as a heterodimer with protein bS6 to the central domain of the 16S rRNA, where it helps stabilize the platform of the 30S subunit. In Rhizorhabdus wittichii (strain DSM 6014 / CCUG 31198 / JCM 15750 / NBRC 105917 / EY 4224 / RW1) (Sphingomonas wittichii), this protein is Small ribosomal subunit protein bS18.